The sequence spans 696 residues: MLLWILLLETSLCFAAGNVTGDVCKEKICSCNEIEGDLHVDCEKKGFTSLQRFTAPTSQFYHLFLHGNSLTRLFPNEFANFYNAVSLHMENNGLHEIVPGAFLGLQLVKRLHINNNKIKSFRKQTFLGLDDLEYLQADFNLLRDIDPGAFQDLNKLEVLILNDNLISTLPANVFQYVPITHLDLRGNRLKTLPYEEVLEQIPGIAEILLEDNPWDCTCDLLSLKEWLENIPKNALIGRVVCEAPTRLQGKDLNETTEQDLCPLKNRVDSSLPAPPAQEETFAPGPLPTPFKTNGQEDHATPGSAPNGGTKIPGNWQIKIRPTAAIATGSSRNKPLANSLPCPGGCSCDHIPGSGLKMNCNNRNVSSLADLKPKLSNVQELFLRDNKIHSIRKSHFVDYKNLILLDLGNNNIATVENNTFKNLLDLRWLYMDSNYLDTLSREKFAGLQNLEYLNVEYNAIQLILPGTFNAMPKLRILILNNNLLRSLPVDVFAGVSLSKLSLHNNYFMYLPVAGVLDQLTSIIQIDLHGNPWECSCTIVPFKQWAERLGSEVLMSDLKCETPVNFFRKDFMLLSNDEICPQLYARISPTLTSHSKNSTGLAETGTHSNSYLDTSRVSISVLVPGLLLVFVTSAFTVVGMLVFILRNRKRSKRRDANSSASEINSLQTVCDSSYWHNGPYNADGAHRVYDCGSHSLSD.

Residues Met-1–Gly-17 form the signal peptide. The LRRNT 1 domain maps to Asn-18–Thr-57. At Asn-18–Pro-622 the chain is on the extracellular side. 6 LRR repeats span residues Gln-59 to Asn-80, Asn-83 to Gly-104, Gln-106 to Gly-128, Asp-131 to Asp-152, Lys-155 to Tyr-176, and Pro-178 to Glu-199. The LRRCT 1 domain occupies Asn-212 to Leu-263. The disordered stretch occupies residues Asn-265–Asn-314. Positions Asn-332–Lys-373 constitute an LRRNT 2 domain. LRR repeat units follow at residues Asn-376 to Asp-397, Asn-400 to Asn-421, Asp-424 to Gly-445, Asn-448 to Ala-469, Lys-472 to Gly-493, and Ser-495 to Asp-516. Residues Asn-529–Gln-580 enclose the LRRCT 2 domain. A helical membrane pass occupies residues Gly-623–Leu-643. Over Arg-644–Asp-696 the chain is Cytoplasmic. A Phosphoserine; by CK2 modification is found at Ser-695.

This sequence belongs to the SLITRK family. Can form homodimers; homodimerization requires repeat LRR 2. Interacts with YWHAB, YWHAE, YWHAG, YWHAH, SFN, YWHAQ and YWHAZ. Post-translationally, undergoes proteolytic cleavage that results in shedding of the ectodomain and cleavage of the C-terminal cytoplasmic tail. Glycosylated. Phosphorylation at Ser-695 is necessary for proper function in promoting neurite outgrowth. In terms of tissue distribution, expressed predominantly in the frontal lobe of the cerebral cortex of the brain. Also expressed in some astrocytic brain tumors such as astrocytomas, oligodendrogliomas, glioblastomas, gangliogliomas and primitive neuroectodermal tumors.

It is found in the membrane. Its subcellular location is the secreted. It localises to the synapse. Its function is as follows. It is involved in synaptogenesis and promotes excitatory synapse differentiation. Enhances neuronal dendrite outgrowth. The polypeptide is SLIT and NTRK-like protein 1 (SLITRK1) (Homo sapiens (Human)).